The following is a 2424-amino-acid chain: Voltage-dependent P/Q-type calcium channel subunit alpha-1A (2424 aa).

The Cytoplasmic portion of the chain corresponds to 1 to 98; it reads MARFGDEMPA…KYAKKITEWP (98 aa). Residues 85 to 363 form an I repeat; sequence NVVRKYAKKI…LVLGVLSGEF (279 aa). The helical transmembrane segment at 99–117 threads the bilayer; that stretch reads PFEYMILATIIANCIVLAL. The Extracellular portion of the chain corresponds to 118–135; it reads EQHLPDDDKTPMSERLDD. A helical membrane pass occupies residues 136 to 155; the sequence is TEPYFIGIFCFEAGIKIIAL. Over 156-167 the chain is Cytoplasmic; it reads GFAFHKGSYLRN. A helical transmembrane segment spans residues 168 to 185; that stretch reads GWNVMDFVVVLTGILATV. Topologically, residues 186-190 are extracellular; sequence GTEFD. The chain crosses the membrane as a helical span at residues 191–209; sequence LRTLRAVRVLRPLKLVSGI. At 210–228 the chain is on the cytoplasmic side; that stretch reads PSLQVVLKSIMKAMIPLLQ. A helical membrane pass occupies residues 229 to 248; the sequence is IGLLLFFAILIFAIIGLEFY. The Extracellular portion of the chain corresponds to 249–335; it reads MGKFHTTCFE…NSNDASGNTW (87 aa). N283 is a glycosylation site (N-linked (GlcNAc...) asparagine). Residue E318 participates in Ca(2+) binding. A helical transmembrane segment spans residues 336-360; that stretch reads NWLYFIPLIIIGSFFMLNLVLGVLS. The Cytoplasmic segment spans residues 361 to 487; that stretch reads GEFAKERERV…FYIRRMVKTQ (127 aa). A binding to the beta subunit region spans residues 383-400; the sequence is QQIERELNGYMEWISKAE. Phosphothreonine is present on T409. Phosphoserine is present on residues S448 and S451. Residues 473-717 form an II repeat; sequence ERRMRFYIRR…VFLAIAVDNL (245 aa). Residues 488–506 form a helical membrane-spanning segment; it reads AFYWTVLSLVALNTLCVAI. Residues 507–521 are Extracellular-facing; it reads VHYNQPEWLSDFLYY. A helical membrane pass occupies residues 522–541; it reads AEFIFLGLFMSEMFIKMYGL. Residues 542-549 are Cytoplasmic-facing; it reads GTRPYFHS. Residues 550–568 form a helical membrane-spanning segment; it reads SFNCFDCGVIIGSIFEVIW. Residues 569-578 are Extracellular-facing; sequence AVIKPGTSFG. Residues 579–597 form a helical membrane-spanning segment; it reads ISVLRALRLLRIFKVTKYW. At 598–616 the chain is on the cytoplasmic side; it reads ASLRNLVVSLLNSMKSIIS. A helical membrane pass occupies residues 617 to 636; it reads LLFLLFLFIVVFALLGMQLF. Over 637–689 the chain is Extracellular; sequence GGQFNFDEGTPPTNFDTFPAAIMTVFQILTGEDWNEVMYDGIKSQGGVQGGMV. E668 contributes to the Ca(2+) binding site. A helical membrane pass occupies residues 690 to 714; sequence FSIYFIVLTLFGNYTLLNVFLAIAV. Residues 715–1253 lie on the Cytoplasmic side of the membrane; sequence DNLANAQELT…RLCHYILNLR (539 aa). S750, S753, and S790 each carry phosphoserine. The segment at 819–1229 is disordered; the sequence is HLDRPLVVDP…GEDGPKPMPP (411 aa). Composition is skewed to basic and acidic residues over residues 893–912, 922–931, and 969–996; these read ELSR…REGG, EAERGKAGDP, and RPGE…RSGE. Over residues 1053-1065 the composition is skewed to polar residues; the sequence is PNLSTTRPIQQDL. Phosphoserine is present on residues S1091 and S1104. Positions 1110 to 1140 are enriched in low complexity; that stretch reads SSTDPAGPTPATAANPQNSTASRRTPNNPGN. Positions 1151 to 1168 are enriched in polar residues; sequence ENSLIVTNPSTAQTNSAK. Over residues 1204-1214 the composition is skewed to basic and acidic residues; sequence LPKKEDEKKEE. One copy of the III repeat lies at 1240–1523; the sequence is NPLRRLCHYI…IFVALIIITF (284 aa). The chain crosses the membrane as a helical span at residues 1254–1272; it reads YFEMCILMVIAMSSIALAA. Residues 1273–1288 are Extracellular-facing; the sequence is EDPVQPNAPRNNVLRY. Residues 1289 to 1308 traverse the membrane as a helical segment; it reads FDYVFTGVFTFEMVIKMIDL. Residues 1309–1320 lie on the Cytoplasmic side of the membrane; it reads GLVLHQGAYFRD. The helical transmembrane segment at 1321-1339 threads the bilayer; sequence LWNILDFIVVSGALVAFAF. The Extracellular segment spans residues 1340-1350; sequence TGNSKGKDINT. A helical transmembrane segment spans residues 1351–1369; it reads IKSLRVLRVLRPLKTIKRL. Topologically, residues 1370 to 1388 are cytoplasmic; the sequence is PKLKAVFDCVVNSLKNVFN. A helical membrane pass occupies residues 1389 to 1408; the sequence is ILIVYMLFMFIFAVVAVQLF. Residues 1409-1495 lie on the Extracellular side of the membrane; it reads KGKFFHCTDE…QGPSPGYRME (87 aa). Residue E1469 coordinates Ca(2+). The chain crosses the membrane as a helical span at residues 1496 to 1520; sequence MSIFYVVYFVVFPFFFVNIFVALII. The Cytoplasmic segment spans residues 1521-1575; the sequence is ITFQEQGDKMMEEYSLEKNERACIDFAISAKPLTRHMPQNKQSFQYRMWQFVVSP. One copy of the IV repeat lies at 1560–1823; sequence NKQSFQYRMW…LFVAVIMDNF (264 aa). A helical transmembrane segment spans residues 1576–1604; the sequence is PFEYTIMAMIALNTIVLMMKFYGASVAYD. The Extracellular portion of the chain corresponds to 1605 to 1609; the sequence is NALKV. The helical transmembrane segment at 1610–1629 threads the bilayer; sequence FNIVFTSLFSLECLLKVLAF. Topologically, residues 1630 to 1637 are cytoplasmic; sequence GILNYFRD. Residues 1638–1656 form a helical membrane-spanning segment; the sequence is AWNIFDFVTVLGSITDILV. Topologically, residues 1657–1665 are extracellular; sequence TEFGNNFIN. N1665 is a glycosylation site (N-linked (GlcNAc...) asparagine). A helical membrane pass occupies residues 1666–1684; it reads LSFLRLFRAARLIKLLRQG. Over 1685 to 1703 the chain is Cytoplasmic; it reads YTIRILLWTFVQSFKALPY. A helical transmembrane segment spans residues 1704 to 1723; that stretch reads VCLLIAMLFFIYAIIGMQVF. At 1724 to 1795 the chain is on the extracellular side; it reads GNIGIDMEDE…ILTPECGNEF (72 aa). Residues 1796-1820 traverse the membrane as a helical segment; the sequence is AYFYFVSFIFLCSFLMLNLFVAVIM. Topologically, residues 1821–2424 are cytoplasmic; that stretch reads DNFEYLTRDS…GGPRASAPSP (604 aa). T1993 carries the post-translational modification Phosphothreonine. Positions 1997–2424 are disordered; it reads FQRMEPPPDE…GGPRASAPSP (428 aa). Over residues 2037–2053 the composition is skewed to polar residues; the sequence is SWVTQRAQEMFQKTGTW. A phosphoserine mark is found at S2054, S2072, S2084, S2086, S2127, and S2148. Residues 2074–2090 show a composition bias toward basic and acidic residues; that stretch reads EMREMSQDGYSDSEHCL. Basic and acidic residues-rich tracts occupy residues 2142–2159 and 2200–2210; these read RRLD…ENQR and PSREREQERGR. Positions 2211-2229 are enriched in basic residues; sequence PKDRKHRPHHHHHHHHHPG. Low complexity predominate over residues 2249–2262; that stretch reads VARVRPARAPALAH. The span at 2280–2305 shows a compositional bias: basic residues; that stretch reads RRARRPRPRQRRRPRRRRGGGGRALR.

This sequence belongs to the calcium channel alpha-1 subunit (TC 1.A.1.11) family. CACNA1A subfamily. In terms of assembly, voltage-dependent calcium channels are multisubunit complexes, consisting of alpha-1, alpha-2, beta and delta subunits in a 1:1:1:1 ratio. The channel activity is directed by the pore-forming and voltage-sensitive alpha-1 subunit. In many cases, this subunit is sufficient to generate voltage-sensitive calcium channel activity. The auxiliary subunits beta and alpha-2/delta linked by a disulfide bridge regulate the channel activity. Interacts with CABP1. Interacts with the spider omega-agatoxin-IVA (AC P30288). Interacts with TSPOAP1. As to expression, brain specific. Purkinje cells contain predominantly P-type VSCC, the Q-type being a prominent calcium current in cerebellar granule cells.

The protein localises to the cell membrane. The enzyme catalyses Ca(2+)(in) = Ca(2+)(out). Its function is as follows. Voltage-sensitive calcium channels (VSCC) mediate the entry of calcium ions into excitable cells and are also involved in a variety of calcium-dependent processes, including muscle contraction, hormone or neurotransmitter release, gene expression, cell motility, cell division and cell death. The isoform alpha-1A gives rise to P and/or Q-type calcium currents. P/Q-type calcium channels belong to the 'high-voltage activated' (HVA) group and are specifically blocked by the spider omega-agatoxin-IVA (AC P54282). They are however insensitive to dihydropyridines (DHP). This chain is Voltage-dependent P/Q-type calcium channel subunit alpha-1A (CACNA1A), found in Oryctolagus cuniculus (Rabbit).